Consider the following 290-residue polypeptide: Acetylglutamate kinase (290 aa).

Residues 60 to 61 (GG), Arg-82, and Asn-185 each bind substrate.

This sequence belongs to the acetylglutamate kinase family. ArgB subfamily.

The protein localises to the cytoplasm. The enzyme catalyses N-acetyl-L-glutamate + ATP = N-acetyl-L-glutamyl 5-phosphate + ADP. The protein operates within amino-acid biosynthesis; L-arginine biosynthesis; N(2)-acetyl-L-ornithine from L-glutamate: step 2/4. Its function is as follows. Catalyzes the ATP-dependent phosphorylation of N-acetyl-L-glutamate. This Archaeoglobus fulgidus (strain ATCC 49558 / DSM 4304 / JCM 9628 / NBRC 100126 / VC-16) protein is Acetylglutamate kinase.